The sequence spans 429 residues: MFVDQVKIYVKAGNGGDGMVAFRREKFVPNGGPAGGDGGKGADVVFVVDEGLRTLVDFRFKRIFKAEHGDHGMSKSMHGRGAEDLVVKVPQGTIVKDIDTGEIIADLVAHGQRAVIAKAGRGGRGNKRFATPANPAPELSENGEPGQERNVQLELKVLADVGLVGFPSVGKSTLLSVVSAARPKIAAYHFTTIVPNLGMVDAGDGRSFVMADLPGLIEGASQGVGLGHQFLRHIERTRVIVHVIDMSGSEGRVPYEDYMAINNELEQYNLRLMERPQIIVANKMDMPDAEENLKEFKTKIAEDIPVFPISAVTKTGLRELLLAIADKLETTPEFPLNEILEQEDEDTVLYKYVAEEPDFEITREPDGTFVLSGAKIERLFTMTNFERDASISRFARQLRAMGVDEALRKRGAKDGDIVRLLDYEFEFMD.

An Obg domain is found at 1–158 (MFVDQVKIYV…RNVQLELKVL (158 aa)). The segment at 124 to 145 (RGNKRFATPANPAPELSENGEP) is disordered. The OBG-type G domain occupies 159–329 (ADVGLVGFPS…LLLAIADKLE (171 aa)). GTP contacts are provided by residues 165 to 172 (GFPSVGKS), 190 to 194 (FTTIV), 212 to 215 (DLPG), 282 to 285 (NKMD), and 310 to 312 (SAV). Mg(2+)-binding residues include Ser-172 and Thr-192. Residues 351–429 (KYVAEEPDFE…LLDYEFEFMD (79 aa)) enclose the OCT domain.

The protein belongs to the TRAFAC class OBG-HflX-like GTPase superfamily. OBG GTPase family. As to quaternary structure, monomer. It depends on Mg(2+) as a cofactor.

It is found in the cytoplasm. Its function is as follows. An essential GTPase which binds GTP, GDP and possibly (p)ppGpp with moderate affinity, with high nucleotide exchange rates and a fairly low GTP hydrolysis rate. Plays a role in control of the cell cycle, stress response, ribosome biogenesis and in those bacteria that undergo differentiation, in morphogenesis control. This is GTPase Obg from Listeria innocua serovar 6a (strain ATCC BAA-680 / CLIP 11262).